The following is a 299-amino-acid chain: Ornithine carbamoyltransferase (299 aa).

Residues 52–55 (STRT), Gln-79, Arg-103, and 130–133 (HPCQ) each bind carbamoyl phosphate. Residues Asn-161, Asp-218, and 222–223 (SM) each bind L-ornithine. Carbamoyl phosphate-binding positions include 258-259 (CL) and Arg-286.

It belongs to the aspartate/ornithine carbamoyltransferase superfamily. OTCase family.

The protein resides in the cytoplasm. The enzyme catalyses carbamoyl phosphate + L-ornithine = L-citrulline + phosphate + H(+). It participates in amino-acid biosynthesis; L-arginine biosynthesis; L-arginine from L-ornithine and carbamoyl phosphate: step 1/3. Functionally, reversibly catalyzes the transfer of the carbamoyl group from carbamoyl phosphate (CP) to the N(epsilon) atom of ornithine (ORN) to produce L-citrulline. In Ruthia magnifica subsp. Calyptogena magnifica, this protein is Ornithine carbamoyltransferase.